The primary structure comprises 176 residues: 3-hydroxydecanoyl-[acyl-carrier-protein] dehydratase (176 aa).

The active site involves His71.

This sequence belongs to the thioester dehydratase family. FabA subfamily. Homodimer.

Its subcellular location is the cytoplasm. The enzyme catalyses a (3R)-hydroxyacyl-[ACP] = a (2E)-enoyl-[ACP] + H2O. The catalysed reaction is (3R)-hydroxydecanoyl-[ACP] = (2E)-decenoyl-[ACP] + H2O. It carries out the reaction (2E)-decenoyl-[ACP] = (3Z)-decenoyl-[ACP]. It functions in the pathway lipid metabolism; fatty acid biosynthesis. Its function is as follows. Necessary for the introduction of cis unsaturation into fatty acids. Catalyzes the dehydration of (3R)-3-hydroxydecanoyl-ACP to E-(2)-decenoyl-ACP and then its isomerization to Z-(3)-decenoyl-ACP. Can catalyze the dehydratase reaction for beta-hydroxyacyl-ACPs with saturated chain lengths up to 16:0, being most active on intermediate chain length. The protein is 3-hydroxydecanoyl-[acyl-carrier-protein] dehydratase of Afipia carboxidovorans (strain ATCC 49405 / DSM 1227 / KCTC 32145 / OM5) (Oligotropha carboxidovorans).